The chain runs to 504 residues: Anaerobic nitric oxide reductase transcription regulator NorR (504 aa).

4-aspartylphosphate is present on Asp57. A Sigma-54 factor interaction domain is found at 187 to 416 (MIGLSPGMTQ…LEHAIHRAVV (230 aa)). ATP-binding positions include 215–222 (GETGTGKE) and 278–287 (ADNGTLFLDE). Residues 479–498 (WAACARMLETDVANLHRLAK) constitute a DNA-binding region (H-T-H motif).

The protein operates within nitrogen metabolism; nitric oxide reduction. In terms of biological role, required for the expression of anaerobic nitric oxide (NO) reductase, acts as a transcriptional activator for at least the norVW operon. Activation also requires sigma-54. This is Anaerobic nitric oxide reductase transcription regulator NorR from Escherichia coli (strain SE11).